The chain runs to 446 residues: Glucarate dehydratase (446 aa).

Substrate contacts are provided by H32, T103, Y150, and K205. K207 serves as the catalytic Proton acceptor. Positions 235, 266, and 289 each coordinate Mg(2+). Residue 235 to 237 coordinates substrate; it reads DPN. Residues N289, 339–341, H368, and R422 contribute to the substrate site; that span reads HSN. H339 (proton acceptor) is an active-site residue.

The protein belongs to the mandelate racemase/muconate lactonizing enzyme family. GlucD subfamily. As to quaternary structure, homodimer. It depends on Mg(2+) as a cofactor.

It catalyses the reaction D-glucarate = 5-dehydro-4-deoxy-D-glucarate + H2O. It participates in carbohydrate acid metabolism; D-glucarate degradation; 2,5-dioxopentanoate from D-glucarate: step 1/2. Functionally, catalyzes the dehydration of glucarate to 5-keto-4-deoxy-D-glucarate (5-kdGluc). Also acts on L-idarate. This Escherichia coli O157:H7 protein is Glucarate dehydratase (gudD).